The primary structure comprises 239 residues: Sugar fermentation stimulation protein homolog (239 aa).

The protein belongs to the SfsA family.

This chain is Sugar fermentation stimulation protein homolog, found in Sinorhizobium medicae (strain WSM419) (Ensifer medicae).